The sequence spans 167 residues: 3-isopropylmalate dehydratase small subunit (167 aa).

Belongs to the LeuD family. LeuD type 2 subfamily. In terms of assembly, heterodimer of LeuC and LeuD.

The catalysed reaction is (2R,3S)-3-isopropylmalate = (2S)-2-isopropylmalate. Its pathway is amino-acid biosynthesis; L-leucine biosynthesis; L-leucine from 3-methyl-2-oxobutanoate: step 2/4. In terms of biological role, catalyzes the isomerization between 2-isopropylmalate and 3-isopropylmalate, via the formation of 2-isopropylmaleate. This is 3-isopropylmalate dehydratase small subunit from Nitratidesulfovibrio vulgaris (strain ATCC 29579 / DSM 644 / CCUG 34227 / NCIMB 8303 / VKM B-1760 / Hildenborough) (Desulfovibrio vulgaris).